We begin with the raw amino-acid sequence, 140 residues long: Endoribonuclease YbeY (140 aa).

His-105, His-109, and Asp-115 together coordinate Zn(2+).

Belongs to the endoribonuclease YbeY family. It depends on Zn(2+) as a cofactor.

The protein resides in the cytoplasm. Single strand-specific metallo-endoribonuclease involved in late-stage 70S ribosome quality control and in maturation of the 3' terminus of the 16S rRNA. The protein is Endoribonuclease YbeY of Flavobacterium psychrophilum (strain ATCC 49511 / DSM 21280 / CIP 103535 / JIP02/86).